We begin with the raw amino-acid sequence, 818 residues long: H(+)/Cl(-) exchange transporter 3 (818 aa).

At 1–125 the chain is on the cytoplasmic side; it reads MESEQLFHRG…WEMTKSLYDA (125 aa). 3 short sequence motifs (di-leucine internalization motif; mediates targeting to late endosome and lysosome membranes) span residues 28-29, 46-47, and 71-75; these read LL and LLDLL. Residues 126-163 traverse the membrane as a helical segment; that stretch reads WSGWLVVTLTGLASGALAGLIDIAADWMTDLKEGICLS. N-linked (GlcNAc...) asparagine glycosylation occurs at asparagine 177. Residues 209-232 form a helical membrane-spanning segment; it reads MNYIMYIFWALSFAFLAVSLVKVF. Residues 238 to 242 carry the Selectivity filter part_1 motif; the sequence is GSGIP. Serine 239 is a chloride binding site. Residues 241–248 constitute an intramembrane region (helical); sequence IPEIKTIL. A run of 2 helical transmembrane segments spans residues 258-276 and 282-301; these read GKWTLMIKTITLVLAVASG and EGPLVHVACCCGNIFSYLFP. A Selectivity filter part_2 motif is present at residues 280–284; it reads GKEGP. 2 consecutive intramembrane regions (helical) follow at residues 313–325 and 329–337; these read VLSAASAAGVSVA and PIGGVLFSL. 3 consecutive transmembrane segments (helical) span residues 349-367, 391-416, and 423-443; these read LWRSFFAALVAAFVLRSIN, FPFILLGVFGGLWGAFFIRANIAWCR, and FGKYPVLEVIIVAAITAVIAF. 2 N-linked (GlcNAc...) asparagine glycosylation sites follow: asparagine 451 and asparagine 479. 2 helical membrane-spanning segments follow: residues 500 to 520 and 525 to 544; these read IWQLCLALIFKIIMTVFTFGI and GLFIPSMAIGAIAGRIVGIA. The short motif at 525-529 is the Selectivity filter part_3 element; the sequence is GLFIP. Phenylalanine 527 contacts chloride. 2 consecutive intramembrane regions (helical) follow at residues 572-586 and 590-601; these read GLYAMVGAAACLGGV and TVSLVVIVFELT. The segment at residues 602 to 605 is an intramembrane region (note=Loop between two helices); sequence GGLE. A helical membrane pass occupies residues 606 to 624; it reads YIVPLMAAVMTSKWVGDAF. At 625 to 818 the chain is on the cytoplasmic side; the sequence is GREGIYEAHI…NQDPASIMFN (194 aa). Tyrosine 630 is a chloride binding site. CBS domains lie at 658-722 and 755-812; these read MRPR…ARKK and LDMS…NQDP. Residues 689-691 and 796-799 each bind ATP; these read YNG and TKKD.

Belongs to the chloride channel (TC 2.A.49) family. ClC-3/CLCN3 subfamily. As to quaternary structure, monomer and homodimer. Forms heterodimers with CLCN4. Post-translationally, N-glycosylated. In terms of tissue distribution, abundant in brain, especially in the olfactory bulb, hippocampus, and cerebellum. A moderate expression is seen in the lung, kidney and adrenal gland.

The protein resides in the lysosome membrane. The protein localises to the late endosome membrane. Its subcellular location is the cell membrane. It is found in the early endosome membrane. In terms of biological role, strongly outwardly rectifying, electrogenic H(+)/Cl(-)exchanger which mediates the exchange of chloride ions against protons. The CLC channel family contains both chloride channels and proton-coupled anion transporters that exchange chloride or another anion for protons. The presence of conserved gating glutamate residues is typical for family members that function as antiporters. Its function is as follows. Strongly outwardly rectifying, electrogenic H(+)/Cl(-)exchanger which mediates the exchange of chloride ions against protons. May play an important role in neuronal cell function through regulation of membrane excitability by protein kinase C. It could help neuronal cells to establish short-term memory. In Rattus norvegicus (Rat), this protein is H(+)/Cl(-) exchange transporter 3 (Clcn3).